Reading from the N-terminus, the 208-residue chain is Probable GTP-binding protein EngB (208 aa).

The region spanning Gly22 to Ala195 is the EngB-type G domain. Residues Gly30–Ser37, Gly57–Thr61, Asp75–Gly78, Thr142–Asp145, and Ile174–Ser176 each bind GTP. Positions 37 and 59 each coordinate Mg(2+).

The protein belongs to the TRAFAC class TrmE-Era-EngA-EngB-Septin-like GTPase superfamily. EngB GTPase family. Mg(2+) serves as cofactor.

Its function is as follows. Necessary for normal cell division and for the maintenance of normal septation. In Alkaliphilus oremlandii (strain OhILAs) (Clostridium oremlandii (strain OhILAs)), this protein is Probable GTP-binding protein EngB.